The following is a 448-amino-acid chain: Omega-6 fatty acid desaturase, chloroplastic (448 aa).

The transit peptide at 1 to 69 directs the protein to the chloroplast; that stretch reads MASRIADSLF…VKRRIGCIKA (69 aa). The residue at position 70 (valine 70) is an N-acetylvaline. The next 2 membrane-spanning stretches (helical) occupy residues 124 to 144 and 149 to 169; these read LKALKSVLISVTSYTLGLFMI and WYLLPLAWAWTGTAITGFFVI. Positions 171–175 match the Histidine box-1 motif; it reads HDCAH. The short motif at 207–211 is the Histidine box-2 element; sequence HDRHH. Helical transmembrane passes span 282 to 302 and 303 to 323; these read VFAFMAVGWPLIVYKVGILGW and VKFWLMPWLGYHFWMSTFTMV. Residues 367 to 371 carry the Histidine box-3 motif; the sequence is HIPHH.

It belongs to the fatty acid desaturase type 1 family.

The protein localises to the plastid. It localises to the chloroplast inner membrane. It carries out the reaction a (9Z)-octadecenoyl-containing glycerolipid + 2 reduced [2Fe-2S]-[ferredoxin] + O2 + 2 H(+) = a (9Z,12Z)-octadecadienoyl-containing glycerolipid + 2 oxidized [2Fe-2S]-[ferredoxin] + 2 H2O. The protein operates within lipid metabolism; polyunsaturated fatty acid biosynthesis. Functionally, chloroplast omega-6 fatty acid desaturase introduces the second double bond in the biosynthesis of 16:3 and 18:3 fatty acids, important constituents of plant membranes. It is thought to use ferredoxin as an electron donor and to act on fatty acids esterified to galactolipids, sulfolipids and phosphatidylglycerol. The chain is Omega-6 fatty acid desaturase, chloroplastic from Arabidopsis thaliana (Mouse-ear cress).